Reading from the N-terminus, the 901-residue chain is MLIPSKLSRPVRLDHTVVRERLLAKLSGANNFRLALITSPAGYGKTTLISQWAAGKNDIGWYSLDEGDNQQERFASYLIAAVQQATNGHCAICETMAQKRQYASLTSLFAQLFIELAEWHSPLYLVIDDYHLITNPVIHESMRFFIRHQPENLTLVVLSRNLPQLGIANLRVRDQLLEIGSQQLAFTHQEAKQFFDCRLSSPIEAAESSRICDDVSGWATALQLIALSARQNTHSAHKSARRLAGINASHLSDYLVDEVLDNVDLATRHFLLKSAILRSMNDALITRVTGEENGQMRLEEIERQGLFLQRMDDTGEWFCYHPLFGNFLRQRCQWELAAELPEIHRAAAESWMAQGFPSEAIHHALAAGDALMLRDILLNHAWSLFNHSELSLLEESLKALPWDSLLENPQLVLLQAWLMQSQHRYGEVNTLLARAEHEIKDIREDTMHAEFNALRAQVAINDGNPDEAERLAKLALEELPPGWFYSRIVATSVLGEVLHCKGELTRSLALMQQTEQMARQHDVWHYALWSLIQQSEILFAQGFLQTAWETQEKAFQLINEQHLEQLPMHEFLVRIRAQLLWAWARLDEAEASARSGIEVLSSYQPQQQLQCLAMLIQCSLARGDLDNARSQLNRLENLLGNGKYHSDWISNANKVRVIYWQMTGDKAAAANWLRHTAKPEFANNHFLQGQWRNIARAQILLGEFEPAEIVLEELNENARSLRLMSDLNRNLLLLNQLYWQAGRKSDAQRVLLDALKLANRTGFISHFVIEGEAMAQQLRQLIQLNTLPELEQHRAQRILREINQHHRHKFAHFDENFVERLLNHPEVPELIRTSPLTQREWQVLGLIYSGYSNEQIAGELEVAATTIKTHIRNLYQKLGVAHRQDAVQHAQQLLKMMGYGV.

39–46 (SPAGYGKT) contacts ATP. The 66-residue stretch at 829–894 (ELIRTSPLTQ…DAVQHAQQLL (66 aa)) folds into the HTH luxR-type domain. A DNA-binding region (H-T-H motif) is located at residues 853-872 (NEQIAGELEVAATTIKTHIR).

This sequence belongs to the MalT family. In terms of assembly, monomer in solution. Oligomerizes to an active state in the presence of the positive effectors ATP and maltotriose.

With respect to regulation, activated by ATP and maltotriose, which are both required for DNA binding. Functionally, positively regulates the transcription of the maltose regulon whose gene products are responsible for uptake and catabolism of malto-oligosaccharides. Specifically binds to the promoter region of its target genes, recognizing a short DNA motif called the MalT box. This chain is HTH-type transcriptional regulator MalT, found in Escherichia coli (strain K12 / MC4100 / BW2952).